A 428-amino-acid chain; its full sequence is Putative zinc metalloprotease SA1105 (428 aa).

A Zn(2+)-binding site is contributed by His21. Glu22 is an active-site residue. Zn(2+) is bound at residue His25. A run of 4 helical transmembrane segments spans residues 172–194 (FLTLFAGPLFNFILALVLFIGLA), 309–331 (GSTLIFTAVVGMLASIFTGGFSF), 352–374 (IISLIGYTALLSVNLGIMNLIPI), and 401–420 (TTIIAIGAIFMVVIMILVTW). The PDZ domain maps to 186 to 269 (ALVLFIGLAY…TKSVELTPKK (84 aa)).

This sequence belongs to the peptidase M50B family. Requires Zn(2+) as cofactor.

The protein resides in the cell membrane. This chain is Putative zinc metalloprotease SA1105, found in Staphylococcus aureus (strain N315).